The sequence spans 73 residues: Antitoxin VapB20 (73 aa).

In terms of biological role, antitoxin component of a type II toxin-antitoxin (TA) system. Upon expression in E.coli neutralizes the toxic effect of cognate toxin VapC20. This is Antitoxin VapB20 (vapB20) from Mycobacterium tuberculosis (strain ATCC 25618 / H37Rv).